The chain runs to 503 residues: ATP synthase subunit alpha (503 aa).

Residue 169 to 176 (GDRGTGKT) participates in ATP binding.

Belongs to the ATPase alpha/beta chains family. F-type ATPases have 2 components, CF(1) - the catalytic core - and CF(0) - the membrane proton channel. CF(1) has five subunits: alpha(3), beta(3), gamma(1), delta(1), epsilon(1). CF(0) has three main subunits: a(1), b(2) and c(9-12). The alpha and beta chains form an alternating ring which encloses part of the gamma chain. CF(1) is attached to CF(0) by a central stalk formed by the gamma and epsilon chains, while a peripheral stalk is formed by the delta and b chains.

It localises to the cell inner membrane. It catalyses the reaction ATP + H2O + 4 H(+)(in) = ADP + phosphate + 5 H(+)(out). Functionally, produces ATP from ADP in the presence of a proton gradient across the membrane. The alpha chain is a regulatory subunit. This is ATP synthase subunit alpha from Leptospira interrogans serogroup Icterohaemorrhagiae serovar copenhageni (strain Fiocruz L1-130).